The sequence spans 146 residues: Large ribosomal subunit protein uL15 (146 aa).

Residues 1–54 form a disordered region; sequence MKLHELRPAAGSKSAPKRVGRGTGSGLGRNAGKGEKGQNARSGGGVRPGFEGGQ. Composition is skewed to gly residues over residues 21-31 and 42-52; these read RGTGSGLGRNA and SGGGVRPGFEG.

The protein belongs to the universal ribosomal protein uL15 family. In terms of assembly, part of the 50S ribosomal subunit.

In terms of biological role, binds to the 23S rRNA. The protein is Large ribosomal subunit protein uL15 of Clostridium perfringens (strain ATCC 13124 / DSM 756 / JCM 1290 / NCIMB 6125 / NCTC 8237 / Type A).